An 879-amino-acid polypeptide reads, in one-letter code: Alanine--tRNA ligase (879 aa).

Residues H566, H570, C668, and H672 each coordinate Zn(2+).

The protein belongs to the class-II aminoacyl-tRNA synthetase family. Zn(2+) serves as cofactor.

The protein resides in the cytoplasm. It carries out the reaction tRNA(Ala) + L-alanine + ATP = L-alanyl-tRNA(Ala) + AMP + diphosphate. In terms of biological role, catalyzes the attachment of alanine to tRNA(Ala) in a two-step reaction: alanine is first activated by ATP to form Ala-AMP and then transferred to the acceptor end of tRNA(Ala). Also edits incorrectly charged Ser-tRNA(Ala) and Gly-tRNA(Ala) via its editing domain. The chain is Alanine--tRNA ligase from Clostridium perfringens (strain ATCC 13124 / DSM 756 / JCM 1290 / NCIMB 6125 / NCTC 8237 / Type A).